The following is a 405-amino-acid chain: Cellobiose 2-epimerase (405 aa).

This sequence belongs to the cellobiose 2-epimerase family.

The enzyme catalyses D-cellobiose = beta-D-glucosyl-(1-&gt;4)-D-mannopyranose. Catalyzes the reversible epimerization of cellobiose to 4-O-beta-D-glucopyranosyl-D-mannose (Glc-Man). Can also epimerize lactose to epilactose. The chain is Cellobiose 2-epimerase (ce13) from Eubacterium cellulosolvens.